A 105-amino-acid chain; its full sequence is Resistin-like beta (105 aa).

Residues 1 to 23 (MKPTLCFLFILVSLFPLIVPGNA) form the signal peptide. 5 disulfides stabilise this stretch: cysteine 49/cysteine 102, cysteine 61/cysteine 101, cysteine 70/cysteine 87, cysteine 72/cysteine 89, and cysteine 76/cysteine 91.

Belongs to the resistin/FIZZ family. Homodimer; disulfide-linked. Heterodimer with RETNLG. In terms of tissue distribution, strongly expressed in colon, and at lower levels in ileum. In colon, found throughout the crypt and surface epithelium and in goblet cells (at protein level). Specific to the gastrointestinal tract; not detected in other tissues tested.

It localises to the secreted. Probable hormone. In Mus musculus (Mouse), this protein is Resistin-like beta (Retnlb).